Consider the following 124-residue polypeptide: MNAVAQAATPDVNEVPAPLVFTDSAADKVKQLIEEEGNPELKLRVFVQGGGCSGFQYGFTFDEETNEDDTTMTKNGVSLLIDSMSYQYLVGAEIDYKEDINGAQFVIKNPNASTTCGCGSSFSV.

Positions 52, 116, and 118 each coordinate iron-sulfur cluster.

It belongs to the HesB/IscA family. In terms of assembly, homodimer. The cofactor is iron-sulfur cluster.

Its function is as follows. Required for insertion of 4Fe-4S clusters. The sequence is that of Putative iron-sulfur cluster insertion protein ErpA from Ralstonia pickettii (strain 12J).